Here is a 358-residue protein sequence, read N- to C-terminus: Alanine racemase (358 aa).

The active-site Proton acceptor; specific for D-alanine is K35. K35 is subject to N6-(pyridoxal phosphate)lysine. R130 contacts substrate. The Proton acceptor; specific for L-alanine role is filled by Y255. M303 lines the substrate pocket.

This sequence belongs to the alanine racemase family. The cofactor is pyridoxal 5'-phosphate.

The enzyme catalyses L-alanine = D-alanine. The protein operates within amino-acid biosynthesis; D-alanine biosynthesis; D-alanine from L-alanine: step 1/1. Its function is as follows. Catalyzes the interconversion of L-alanine and D-alanine. May also act on other amino acids. In Shewanella woodyi (strain ATCC 51908 / MS32), this protein is Alanine racemase (alr).